We begin with the raw amino-acid sequence, 25 residues long: Ribosome-inactivating protein velutin (25 aa).

The interval 1 to 25 (XHPDLFXXRPDNTASPKFEDPRLNP) is disordered.

It belongs to the ribosome-inactivating protein family.

The catalysed reaction is Endohydrolysis of the N-glycosidic bond at one specific adenosine on the 28S rRNA.. Functionally, inhibits protein synthesis but does not possess ribonuclease activity. Also inhibits HIV-1 reverse transcriptase, beta-glucosidase and beta-glucuronidase. The polypeptide is Ribosome-inactivating protein velutin (Flammulina velutipes (Agaricus velutipes)).